The chain runs to 122 residues: Large ribosomal subunit protein uL14c (122 aa).

This sequence belongs to the universal ribosomal protein uL14 family. In terms of assembly, part of the 50S ribosomal subunit.

The protein localises to the plastid. The protein resides in the chloroplast. Binds to 23S rRNA. This is Large ribosomal subunit protein uL14c from Illicium oligandrum (Star anise).